The following is a 192-amino-acid chain: GTP cyclohydrolase-2 (192 aa).

50-54 lines the GTP pocket; it reads RLHSE. 3 residues coordinate Zn(2+): Cys55, Cys66, and Cys68. GTP is bound by residues 92–94 and Thr114; that span reads EGR. The Proton acceptor role is filled by Asp126. The active-site Nucleophile is the Arg128. GTP contacts are provided by Thr149 and Lys154.

Belongs to the GTP cyclohydrolase II family. It depends on Zn(2+) as a cofactor.

It carries out the reaction GTP + 4 H2O = 2,5-diamino-6-hydroxy-4-(5-phosphoribosylamino)-pyrimidine + formate + 2 phosphate + 3 H(+). It functions in the pathway cofactor biosynthesis; riboflavin biosynthesis; 5-amino-6-(D-ribitylamino)uracil from GTP: step 1/4. Its function is as follows. Catalyzes the conversion of GTP to 2,5-diamino-6-ribosylamino-4(3H)-pyrimidinone 5'-phosphate (DARP), formate and pyrophosphate. The protein is GTP cyclohydrolase-2 of Helicobacter pylori (strain J99 / ATCC 700824) (Campylobacter pylori J99).